The chain runs to 718 residues: MLFSLRRLKKLANLEAFSDQKVIDSLINLGFEVDQITKLNEISGIKFGQILEIRKNPEADNLWICKVQFADKIREIQTAAKNVIENKQVLAFIPGSKSGNTTFLAKKLRGHISEGMLISAVELGFNKHLLNSELDQGVLVFDPIFDLESNPLKVLELDDLILDIKLLWNRPDGNSYLVLANELAAFFKTDFSLINKEISGKFYSELKIINKTDSKIFALEIQKLPKLALVDIFLLLKSEVKIGNLAQNFSNFILIYTGQPSYCLQLEKHQQKVELIEQKVKIKYEPDTISSYHFLNQEKKPLLIPEFSDQIIMENNSFFLIMPKFNLLKVKQIKQFLKKNSLKLTQLGKNYNYGTTFIALSFLNFFLEDQKIDFSWPINFDKSLISKKTFLDLNYNELKEILGLELSQEDISKTNLILEKIGYNFDNTSFSPPFYRVDIEFFADYAADFLRFYGLEKLKDCKLEQVKAKIPNPDFEPVKLKTLGYYETNSFLLISKEENFNPLELKSQDLLTFPSQEHTKIRYSLAWQLAKITKYNQKRKITEISLYEKGSIAGWNHSLALASTIYTSEDLKKHLKILYNYDFDFLPADSEFLNPEKSQFIYLDNVLVGWLGQVAEKYNYENVNFLEILLSKVEKIPKKEGGKIKFRPYDNSQLKYRDITLSLPMKDIPDPYLKVIQKIPEIFSVKLINYVIINNQQKITYRITGPDQVCAEIDKFYK.

The 115-residue stretch at 39–153 folds into the tRNA-binding domain; the sequence is LNEISGIKFG…IFDLESNPLK (115 aa). Residues 386–460 form the B5 domain; sequence SKKTFLDLNY…RFYGLEKLKD (75 aa). Mg(2+) is bound by residues aspartate 438, aspartate 444, and aspartate 448.

This sequence belongs to the phenylalanyl-tRNA synthetase beta subunit family. Type 1 subfamily. In terms of assembly, tetramer of two alpha and two beta subunits. Mg(2+) serves as cofactor.

It localises to the cytoplasm. The enzyme catalyses tRNA(Phe) + L-phenylalanine + ATP = L-phenylalanyl-tRNA(Phe) + AMP + diphosphate + H(+). This Mesomycoplasma hyopneumoniae (strain J / ATCC 25934 / NCTC 10110) (Mycoplasma hyopneumoniae) protein is Phenylalanine--tRNA ligase beta subunit.